We begin with the raw amino-acid sequence, 131 residues long: Small ribosomal subunit protein uS8 (131 aa).

It belongs to the universal ribosomal protein uS8 family. Part of the 30S ribosomal subunit. Contacts proteins S5 and S12.

Its function is as follows. One of the primary rRNA binding proteins, it binds directly to 16S rRNA central domain where it helps coordinate assembly of the platform of the 30S subunit. This is Small ribosomal subunit protein uS8 from Acinetobacter baumannii (strain AB307-0294).